Here is a 1070-residue protein sequence, read N- to C-terminus: DNA-directed RNA polymerase subunit beta (1070 aa).

Belongs to the RNA polymerase beta chain family. In plastids the minimal PEP RNA polymerase catalytic core is composed of four subunits: alpha, beta, beta', and beta''. When a (nuclear-encoded) sigma factor is associated with the core the holoenzyme is formed, which can initiate transcription.

It localises to the plastid. It is found in the chloroplast. It carries out the reaction RNA(n) + a ribonucleoside 5'-triphosphate = RNA(n+1) + diphosphate. In terms of biological role, DNA-dependent RNA polymerase catalyzes the transcription of DNA into RNA using the four ribonucleoside triphosphates as substrates. This is DNA-directed RNA polymerase subunit beta from Chaetosphaeridium globosum (Charophycean green alga).